Here is a 519-residue protein sequence, read N- to C-terminus: Trichothecene 15-O-acetyltransferase TRI3 (519 aa).

H414 contributes to the 15-deacetylcalonectrin binding site.

It belongs to the trichothecene O-acetyltransferase family.

The protein operates within sesquiterpene biosynthesis; trichothecene biosynthesis. Its function is as follows. 15-O-acetyltransferase; part of the core gene cluster that mediates the biosynthesis of trichothecenes, a very large family of chemically related bicyclic sesquiterpene compounds acting as mycotoxins, including T2-toxin. The biosynthesis of trichothecenes begins with the cyclization of farnesyl diphosphate to trichodiene and is catalyzed by the trichodiene synthase TRI5. Trichodiene undergoes a series of oxygenations catalyzed by the cytochrome P450 monooxygenase TRI4. TRI4 controls the addition of four oxygens at C-2, C-3, C-11, and the C-12, C-13-epoxide to form the intermediate isotrichotriol. Isotrichotriol then undergoes a non-enzymatic isomerization and cyclization to form isotrichodermol. During this process, the oxygen at the C-2 position becomes the pyran ring oxygen and the hydroxyl group at C-11 is lost. More complex type A trichothecenes are built by modifying isotrichodermol through a series of paired hydroxylation and acetylation or acylation steps. Isotrichodermol is converted to isotrichodermin by the acetyltransferase TRI101. TRI101 encodes a C-3 transacetylase that acts as a self-protection or resistance factor during biosynthesis and that the presence of a free C-3 hydroxyl group is a key component of Fusarium trichothecene phytotoxicity. A second hydroxyl group is added to C-15 by the trichothecene C-15 hydroxylase TRI11, producing 15-decalonectrin, which is then acetylated by TRI3, producing calonectrin. A third hydroxyl group is added at C-4 by the cytochrome P450 monooxygenase TRI13, converting calonectrin to 3,15-diacetoxyspirpenol, which is subsequently acetylated by the acetyltransferase TRI7. A fourth hydroxyl group is added to C-8 by the cytochrome P450 monooxygenase TRI1, followed by the addition of an isovaleryl moiety by TRI16. Finally, the acetyl group is removed from the C-3 position by the trichothecene C-3 esterase TRI8 to produce T-2 toxin. This is Trichothecene 15-O-acetyltransferase TRI3 from Fusarium sporotrichioides.